The chain runs to 455 residues: ATP-dependent protease ATPase subunit HslU (455 aa).

Residues I19 and 61–66 (GVGKTE) contribute to the ATP site. The disordered stretch occupies residues 144-163 (ESKVGFANEPAEDAASKKEK). Residues D268, E333, and R405 each contribute to the ATP site.

It belongs to the ClpX chaperone family. HslU subfamily. A double ring-shaped homohexamer of HslV is capped on each side by a ring-shaped HslU homohexamer. The assembly of the HslU/HslV complex is dependent on binding of ATP.

The protein localises to the cytoplasm. In terms of biological role, ATPase subunit of a proteasome-like degradation complex; this subunit has chaperone activity. The binding of ATP and its subsequent hydrolysis by HslU are essential for unfolding of protein substrates subsequently hydrolyzed by HslV. HslU recognizes the N-terminal part of its protein substrates and unfolds these before they are guided to HslV for hydrolysis. This is ATP-dependent protease ATPase subunit HslU from Francisella tularensis subsp. novicida (strain U112).